The chain runs to 290 residues: Phosphatidylglycerol--prolipoprotein diacylglyceryl transferase (290 aa).

The next 7 helical transmembrane spans lie at 21–41 (VALHWYGLMYLVGFIFAMWLA), 60–80 (LLYAGFLGVFLGGRIGYVLFY), 96–116 (WDGGMSFHGGLIGVILVMVIF), 124–144 (FFQVADFMAPLIPFGLGAGRL), 198–218 (SQLYELALEGVVLFIILNLFI), 225–245 (GSVSGLFLIGYGAFRIIVEFF), and 260–280 (ISMGQILSIPMIVAGIIMMIW). Arg143 serves as a coordination point for a 1,2-diacyl-sn-glycero-3-phospho-(1'-sn-glycerol).

Belongs to the Lgt family.

It is found in the cell inner membrane. It catalyses the reaction L-cysteinyl-[prolipoprotein] + a 1,2-diacyl-sn-glycero-3-phospho-(1'-sn-glycerol) = an S-1,2-diacyl-sn-glyceryl-L-cysteinyl-[prolipoprotein] + sn-glycerol 1-phosphate + H(+). It participates in protein modification; lipoprotein biosynthesis (diacylglyceryl transfer). Catalyzes the transfer of the diacylglyceryl group from phosphatidylglycerol to the sulfhydryl group of the N-terminal cysteine of a prolipoprotein, the first step in the formation of mature lipoproteins. This Enterobacter sp. (strain 638) protein is Phosphatidylglycerol--prolipoprotein diacylglyceryl transferase.